The following is a 1130-amino-acid chain: 3-hydroxy-3-methylglutaryl-coenzyme A reductase 1 (1130 aa).

At 1 to 46 (MATSLITRKLRSAEATNDVEPGWLKRQVTGVLQSISSHACQHPIHT) the chain is on the cytoplasmic side. The helical transmembrane segment at 47 to 67 (IVVIALLASTTYVGLLEGSLF) threads the bilayer. Topologically, residues 68 to 242 (DSVRNSRNIA…DLIKHAETID (175 aa)) are lumenal. Residue Asn-148 is glycosylated (N-linked (GlcNAc...) asparagine). An SSD domain is found at 242 to 415 (DIVIMTLGYL…FTFYTTILCI (174 aa)). A helical transmembrane segment spans residues 243-263 (IVIMTLGYLSMHLSFVSLFFS). Over 264–270 (MRRLGSN) the chain is Cytoplasmic. A helical membrane pass occupies residues 271–291 (FWLAATVLFSGVFAFLFGLLV). Residues 292–296 (TTKLG) are Lumenal-facing. A helical membrane pass occupies residues 297 to 317 (VPINVLLLSEGLPFLVVTIGF). Residues 318–366 (EKPIILTRAVLTAAADNRGRAGQASSSTTKSIQDSIQTAIKEQGFEIIR) are Cytoplasmic-facing. Residues 367-387 (DYCIEIAILIAGAASGVQGGL) form a helical membrane-spanning segment. At 388–389 (RQ) the chain is on the lumenal side. A helical transmembrane segment spans residues 390–410 (FCFLAAWILFFDCVLLFTFYT). Over 411–476 (TILCIKLEIN…RKLRSSSVRR (66 aa)) the chain is Cytoplasmic. The chain crosses the membrane as a helical span at residues 477–497 (FKILMVGGFVLVNVVNLSTIP). At 498-601 (FRDSSQGAGL…ESLLKSIEDP (104 aa)) the chain is on the lumenal side. Residues 602–622 (IISKWIIAALTLSIILNGYLF) traverse the membrane as a helical segment. Over 623–1130 (NAARWSIKEP…ARGLTMSSSE (508 aa)) the chain is Cytoplasmic. The Charge relay system role is filled by Glu-792. 798–804 (STSRGAK) provides a ligand contact to CoA. NADP(+)-binding positions include 859 to 861 (SRF) and 886 to 894 (DAMGMNMIS). Lys-926 (charge relay system) is an active-site residue. 955-957 (VLK) is a CoA binding site. Asp-1002 (charge relay system) is an active-site residue. 1097 to 1098 (AH) contributes to the CoA binding site. His-1098 acts as the Proton donor in catalysis. Position 1102-1103 (1102-1103 (NR)) interacts with NADP(+). Positions 1103–1122 (RSAATTRTSTPVSAAVSAAR) are enriched in low complexity. Residues 1103-1130 (RSAATTRTSTPVSAAVSAARGLTMSSSE) are disordered.

It belongs to the HMG-CoA reductase family.

The protein resides in the endoplasmic reticulum membrane. The enzyme catalyses (R)-mevalonate + 2 NADP(+) + CoA = (3S)-3-hydroxy-3-methylglutaryl-CoA + 2 NADPH + 2 H(+). It participates in metabolic intermediate biosynthesis; (R)-mevalonate biosynthesis; (R)-mevalonate from acetyl-CoA: step 3/3. Its function is as follows. HMG-CoA reductase; part of the first module of ergosterol biosynthesis pathway that includes the early steps of the pathway, conserved across all eukaryotes, and which results in the formation of mevalonate from acetyl-coenzyme A (acetyl-CoA). Hmg1 and hmg2 catalyze the reduction of hydroxymethylglutaryl-CoA (HMG-CoA) to mevalonate. The first module starts with the action of the cytosolic acetyl-CoA acetyltransferase erg10B that catalyzes the formation of acetoacetyl-CoA. The hydroxymethylglutaryl-CoA synthases erg13A and erg13B then condense acetyl-CoA with acetoacetyl-CoA to form HMG-CoA. The rate-limiting step of the early module is the reduction to mevalonate by the 3-hydroxy-3-methylglutaryl-coenzyme A (HMG-CoA) reductases hmg1 and hmg2. Mevalonate is also a precursor for the extracellular siderophore triacetylfusarinine C (TAFC). This is 3-hydroxy-3-methylglutaryl-coenzyme A reductase 1 from Aspergillus fumigatus (strain ATCC MYA-4609 / CBS 101355 / FGSC A1100 / Af293) (Neosartorya fumigata).